Here is a 534-residue protein sequence, read N- to C-terminus: Glucans biosynthesis protein D (534 aa).

Positions 1–26 form a signal peptide, tat-type signal; it reads MQRRDFIRNASLALAAFGLPSLPACA.

It belongs to the OpgD/OpgG family. Post-translationally, predicted to be exported by the Tat system. The position of the signal peptide cleavage has not been experimentally proven.

The protein resides in the periplasm. It participates in glycan metabolism; osmoregulated periplasmic glucan (OPG) biosynthesis. In terms of biological role, probably involved in the control of the structural glucose backbone of osmoregulated periplasmic glucans (OPGs). This Stenotrophomonas maltophilia (strain K279a) protein is Glucans biosynthesis protein D.